Here is a 250-residue protein sequence, read N- to C-terminus: 3-deoxy-manno-octulosonate cytidylyltransferase (250 aa).

This sequence belongs to the KdsB family.

The protein localises to the cytoplasm. It carries out the reaction 3-deoxy-alpha-D-manno-oct-2-ulosonate + CTP = CMP-3-deoxy-beta-D-manno-octulosonate + diphosphate. It functions in the pathway nucleotide-sugar biosynthesis; CMP-3-deoxy-D-manno-octulosonate biosynthesis; CMP-3-deoxy-D-manno-octulosonate from 3-deoxy-D-manno-octulosonate and CTP: step 1/1. The protein operates within bacterial outer membrane biogenesis; lipopolysaccharide biosynthesis. Activates KDO (a required 8-carbon sugar) for incorporation into bacterial lipopolysaccharide in Gram-negative bacteria. In Herminiimonas arsenicoxydans, this protein is 3-deoxy-manno-octulosonate cytidylyltransferase.